We begin with the raw amino-acid sequence, 159 residues long: NAD(P)H-quinone oxidoreductase subunit J, chloroplastic (159 aa).

It belongs to the complex I 30 kDa subunit family. As to quaternary structure, NDH is composed of at least 16 different subunits, 5 of which are encoded in the nucleus.

It localises to the plastid. Its subcellular location is the chloroplast thylakoid membrane. The enzyme catalyses a plastoquinone + NADH + (n+1) H(+)(in) = a plastoquinol + NAD(+) + n H(+)(out). It catalyses the reaction a plastoquinone + NADPH + (n+1) H(+)(in) = a plastoquinol + NADP(+) + n H(+)(out). Its function is as follows. NDH shuttles electrons from NAD(P)H:plastoquinone, via FMN and iron-sulfur (Fe-S) centers, to quinones in the photosynthetic chain and possibly in a chloroplast respiratory chain. The immediate electron acceptor for the enzyme in this species is believed to be plastoquinone. Couples the redox reaction to proton translocation, and thus conserves the redox energy in a proton gradient. This Brachypodium distachyon (Purple false brome) protein is NAD(P)H-quinone oxidoreductase subunit J, chloroplastic.